A 323-amino-acid chain; its full sequence is Small ribosomal subunit protein mS35 (323 aa).

The tract at residues 31–59 (PVPTPSLPERTPGNERPPRRKALPPRTEK) is disordered. Residues 257–321 (SSERNILETL…YKESVKRLLN (65 aa)) adopt a coiled-coil conformation.

The protein belongs to the mitochondrion-specific ribosomal protein mS35 family. As to quaternary structure, component of the mitochondrial small ribosomal subunit (mt-SSU). Mature mammalian 55S mitochondrial ribosomes consist of a small (28S) and a large (39S) subunit. The 28S small subunit contains a 12S ribosomal RNA (12S mt-rRNA) and 30 different proteins. The 39S large subunit contains a 16S rRNA (16S mt-rRNA), a copy of mitochondrial valine transfer RNA (mt-tRNA(Val)), which plays an integral structural role, and 52 different proteins.

It localises to the mitochondrion. The chain is Small ribosomal subunit protein mS35 from Homo sapiens (Human).